Consider the following 103-residue polypeptide: Histone H4 (103 aa).

Residues 1-14 (MSGRGKGGKGLGKG) show a composition bias toward gly residues. The tract at residues 1–20 (MSGRGKGGKGLGKGGAKRHR) is disordered. S2 bears the N-acetylserine mark. Residues K6 and K13 each carry the N6-acetyl-N6-methyllysine; alternate modification. K17 carries the post-translational modification N6-acetyllysine. Residues 17-21 (KRHRK) mediate DNA binding. The residue at position 21 (K21) is an N6-methyllysine.

The protein belongs to the histone H4 family. As to quaternary structure, the nucleosome is a histone octamer containing two molecules each of H2A, H2B, H3 and H4 assembled in one H3-H4 heterotetramer and two H2A-H2B heterodimers. The octamer wraps approximately 147 bp of DNA.

The protein resides in the nucleus. It localises to the chromosome. Core component of nucleosome. Nucleosomes wrap and compact DNA into chromatin, limiting DNA accessibility to the cellular machineries which require DNA as a template. Histones thereby play a central role in transcription regulation, DNA repair, DNA replication and chromosomal stability. DNA accessibility is regulated via a complex set of post-translational modifications of histones, also called histone code, and nucleosome remodeling. The chain is Histone H4 (H4DEKL) from Dendronephthya klunzingeri (Klunzinger's soft coral).